The primary structure comprises 369 residues: uncharacterized protein (369 aa).

The protein belongs to the myo-inositol 1-phosphate synthase family.

This is an uncharacterized protein from Mycobacterium leprae (strain TN).